The chain runs to 576 residues: K(+)/H(+) antiporter NhaP2 (576 aa).

13 helical membrane passes run 6-26, 34-54, 58-78, 87-107, 109-129, 163-183, 185-205, 219-239, 242-262, 271-291, 299-319, 335-355, and 359-379; these read INSF…LSPM, ILLI…GGIL, YSTA…DGGM, VALW…TSIT, MMAA…GAIV, PMAV…DTEM, FSFM…LGLG, LADG…YAAS, LGGS…NKPT, VLDG…GLLL, ILIP…PVAV, WFIS…VFPM, and LPGA…SLLV. Residues 405–486 form the RCK C-terminal domain; sequence SGVEIYPSSE…LEALSNLFSQ (82 aa).

The protein belongs to the monovalent cation:proton antiporter 1 (CPA1) transporter (TC 2.A.36) family. NhaP2 subfamily.

It localises to the cell inner membrane. The catalysed reaction is K(+)(in) + H(+)(out) = K(+)(out) + H(+)(in). Its function is as follows. K(+)/H(+) antiporter that extrudes potassium in exchange for external protons and maintains the internal concentration of potassium under toxic levels. This chain is K(+)/H(+) antiporter NhaP2, found in Shewanella baltica (strain OS195).